The primary structure comprises 672 residues: Spermatid perinuclear RNA-binding protein (672 aa).

The region spanning 5–363 is the DZF domain; it reads RSFANDDRHV…ALKRPFEDGL (359 aa). Disordered regions lie at residues 52 to 73 and 349 to 371; these read TNKGTKTEGETEVKKDEAGENY and GAGSSALKRPFEDGLGDDKDPNK. Residues 357-371 are compositionally biased toward basic and acidic residues; it reads RPFEDGLGDDKDPNK. Positions 387–453 constitute a DRBM 1 domain; that stretch reads DLMNALMRLN…AVKVLQAMGY (67 aa). The segment covering 466–476 has biased composition (basic and acidic residues); that stretch reads SDEKSDNESKN. Positions 466–499 are disordered; that stretch reads SDEKSDNESKNETVSSNSSNNTGNSTTETSSTLE. Residues 477–497 are compositionally biased toward low complexity; sequence ETVSSNSSNNTGNSTTETSST. The DRBM 2 domain maps to 510–576; the sequence is SGKNPVMELN…ALAALEKLFS (67 aa). 2 positions are modified to asymmetric dimethylarginine: Arg-612 and Arg-617.

As to quaternary structure, interacts with EIF2AK2. Associates with microtubules; it is unsure whether such interaction is direct or indirect.

Its subcellular location is the cytoplasm. In terms of biological role, involved in spermatogenesis and sperm function. Plays a role in regulation of cell growth. Binds to double-stranded DNA and RNA. Binds most efficiently to poly(I:C) RNA than to poly(dI:dC) DNA. Binds also to single-stranded poly(G) RNA. Binds non-specifically to the mRNA PRM1 3'-UTR and adenovirus VA RNA. The protein is Spermatid perinuclear RNA-binding protein (STRBP) of Pongo abelii (Sumatran orangutan).